A 95-amino-acid chain; its full sequence is Co-chaperonin GroES (95 aa).

The protein belongs to the GroES chaperonin family. Heptamer of 7 subunits arranged in a ring. Interacts with the chaperonin GroEL.

The protein resides in the cytoplasm. Together with the chaperonin GroEL, plays an essential role in assisting protein folding. The GroEL-GroES system forms a nano-cage that allows encapsulation of the non-native substrate proteins and provides a physical environment optimized to promote and accelerate protein folding. GroES binds to the apical surface of the GroEL ring, thereby capping the opening of the GroEL channel. In Chlorobaculum parvum (strain DSM 263 / NCIMB 8327) (Chlorobium vibrioforme subsp. thiosulfatophilum), this protein is Co-chaperonin GroES.